We begin with the raw amino-acid sequence, 431 residues long: Peptidase B (431 aa).

Mn(2+) is bound by residues Lys-196 and Asp-201. The active site involves Lys-208. Residues Asp-219, Asp-278, and Glu-280 each coordinate Mn(2+). Residue Arg-282 is part of the active site.

This sequence belongs to the peptidase M17 family. In terms of assembly, homohexamer. Mn(2+) serves as cofactor.

Its subcellular location is the cytoplasm. It catalyses the reaction Release of an N-terminal amino acid, Xaa, from a peptide or arylamide. Xaa is preferably Glu or Asp but may be other amino acids, including Leu, Met, His, Cys and Gln.. Its function is as follows. Probably plays an important role in intracellular peptide degradation. This is Peptidase B from Vibrio atlanticus (strain LGP32) (Vibrio splendidus (strain Mel32)).